The following is a 121-amino-acid chain: MEAKASARYIRVTPMKARRVVNLIRGQQANEALAILKFAPQAASEPVFKVLESAVANARQKADREGLAFKPEDLVVSAAFVDEGPTMKRFQPRAQGRAFRINKRTSHVTVVVATPEKEEVR.

It belongs to the universal ribosomal protein uL22 family. In terms of assembly, part of the 50S ribosomal subunit.

This protein binds specifically to 23S rRNA; its binding is stimulated by other ribosomal proteins, e.g. L4, L17, and L20. It is important during the early stages of 50S assembly. It makes multiple contacts with different domains of the 23S rRNA in the assembled 50S subunit and ribosome. Its function is as follows. The globular domain of the protein is located near the polypeptide exit tunnel on the outside of the subunit, while an extended beta-hairpin is found that lines the wall of the exit tunnel in the center of the 70S ribosome. The chain is Large ribosomal subunit protein uL22 from Kocuria rhizophila (strain ATCC 9341 / DSM 348 / NBRC 103217 / DC2201).